We begin with the raw amino-acid sequence, 271 residues long: uncharacterized protein (271 aa).

Belongs to the HAD-like hydrolase superfamily.

This is an uncharacterized protein from Staphylococcus aureus (strain MRSA252).